Consider the following 238-residue polypeptide: Outer membrane protein A (238 aa).

The next 5 beta stranded transmembrane spans lie at 1 to 8, 13 to 21, 43 to 52, 57 to 64, and 83 to 91; these read LTAKLGYP, LDIYTRLGG, PVFAGGVEYA, IATRLEYQ, and LLSVGVSYR. Tandem repeats lie at residues 104–105, 106–107, and 108–109. The interval 104-109 is 3 X 2 AA tandem repeats of A-P; that stretch reads APAPAP. An OmpA-like domain is found at 111-238; sequence VQTKHFTLKS…RRVEIEVKGI (128 aa). A disulfide bridge connects residues cysteine 212 and cysteine 224.

The protein belongs to the outer membrane OOP (TC 1.B.6) superfamily. OmpA family. Monomer and homodimer.

Its subcellular location is the cell outer membrane. In terms of biological role, with TolR probably plays a role in maintaining the position of the peptidoglycan cell wall in the periplasm. Acts as a porin with low permeability that allows slow penetration of small solutes; an internal gate slows down solute passage. This chain is Outer membrane protein A, found in Citrobacter freundii.